We begin with the raw amino-acid sequence, 283 residues long: Pantothenate synthetase (283 aa).

Residue 30–37 (MGCLHEGH) participates in ATP binding. Histidine 37 acts as the Proton donor in catalysis. Position 61 (glutamine 61) interacts with (R)-pantoate. Glutamine 61 contributes to the beta-alanine binding site. 147–150 (GQKD) contributes to the ATP binding site. Glutamine 153 contacts (R)-pantoate. ATP-binding positions include valine 176 and 184–187 (KSSR).

This sequence belongs to the pantothenate synthetase family. As to quaternary structure, homodimer.

It is found in the cytoplasm. It carries out the reaction (R)-pantoate + beta-alanine + ATP = (R)-pantothenate + AMP + diphosphate + H(+). Its pathway is cofactor biosynthesis; (R)-pantothenate biosynthesis; (R)-pantothenate from (R)-pantoate and beta-alanine: step 1/1. In terms of biological role, catalyzes the condensation of pantoate with beta-alanine in an ATP-dependent reaction via a pantoyl-adenylate intermediate. The polypeptide is Pantothenate synthetase (Clostridium novyi (strain NT)).